Consider the following 148-residue polypeptide: MGRIIFVSFGLLVVFLSLSGTGAALNCASGWSGYDQHCYKVFDKPKSWADAEKFCKKQTSGGHLVSFHSSEETDFVVKLVSQTLESQILWMGLSKVWNQCDWGWSNGAKLKYKAWAEESYCVYFSSTKKGWRSRACRLLGHFVCKSPA.

Residues 1–24 form the signal peptide; it reads MGRIIFVSFGLLVVFLSLSGTGAA. Intrachain disulfides connect C27/C38, C55/C144, and C121/C136. The C-type lectin domain maps to 34-145; sequence YDQHCYKVFD…CRLLGHFVCK (112 aa).

Belongs to the snaclec family. Heterodimer; disulfide-linked. Expressed by the venom gland.

The protein localises to the secreted. In terms of biological role, interferes with one step of hemostasis (modulation of platelet aggregation, or coagulation cascade, for example). The polypeptide is Snaclec B4 (Macrovipera lebetinus (Levantine viper)).